Here is a 74-residue protein sequence, read N- to C-terminus: Putative defensin-like protein 186 (74 aa).

An N-terminal signal peptide occupies residues 1–22 (MKNSSIILVLVFFFFISSSGEA). 4 cysteine pairs are disulfide-bonded: cysteine 25/cysteine 74, cysteine 31/cysteine 51, cysteine 37/cysteine 68, and cysteine 41/cysteine 70.

The protein belongs to the DEFL family.

Its subcellular location is the secreted. The polypeptide is Putative defensin-like protein 186 (LCR40) (Arabidopsis thaliana (Mouse-ear cress)).